A 286-amino-acid polypeptide reads, in one-letter code: DegV domain-containing protein SPs1668 (286 aa).

Residues 3 to 282 (FTIMTDSTAD…PNTLAVFVIG (280 aa)) enclose the DegV domain. Positions 62 and 94 each coordinate hexadecanoate.

Functionally, may bind long-chain fatty acids, such as palmitate, and may play a role in lipid transport or fatty acid metabolism. This Streptococcus pyogenes serotype M3 (strain SSI-1) protein is DegV domain-containing protein SPs1668.